The primary structure comprises 558 residues: Inositol-3-phosphate synthase 1 (558 aa).

NAD(+) is bound by residues Gly67, Gly68, Asn69, Asn70, Asp141, Ser177, Val178, Gln188, Arg191, Thr228, Ala229, Asn230, Thr231, Gly278, Ser279, Asp303, Ser306, Asn337, Asn338, Asp339, and Lys352. Ser279 is subject to Phosphoserine. A Phosphoserine modification is found at Ser357. NAD(+) contacts are provided by Gly390, Asp391, Asp419, and Ser420. The segment at 537-558 (ATNGCTGDANGHLQEEPPMPTT) is disordered.

Belongs to the myo-inositol 1-phosphate synthase family. NAD(+) serves as cofactor. In terms of processing, phosphorylation at Ser-279 and Ser-357 may be associated with a decrease in activity. As to expression, highly expressed in testis, ovary, heart, placenta and pancreas. Weakly expressed in blood leukocyte, thymus, skeletal muscle and colon.

The protein localises to the cytoplasm. It carries out the reaction D-glucose 6-phosphate = 1D-myo-inositol 3-phosphate. Its pathway is polyol metabolism; myo-inositol biosynthesis; myo-inositol from D-glucose 6-phosphate: step 1/2. Its activity is regulated as follows. Inhibited by mood-stabilizing drugs such as valproate (VPA) and lithium. Functionally, key enzyme in myo-inositol biosynthesis pathway that catalyzes the conversion of glucose 6-phosphate to 1-myo-inositol 1-phosphate in a NAD-dependent manner. Rate-limiting enzyme in the synthesis of all inositol-containing compounds. The sequence is that of Inositol-3-phosphate synthase 1 (ISYNA1) from Homo sapiens (Human).